Here is a 398-residue protein sequence, read N- to C-terminus: Isochorismate synthase DhbC (398 aa).

Position 271 is a phosphoserine (Ser271).

It belongs to the isochorismate synthase family.

It catalyses the reaction chorismate = isochorismate. Its pathway is siderophore biosynthesis; bacillibactin biosynthesis. This Bacillus subtilis (strain 168) protein is Isochorismate synthase DhbC (dhbC).